A 193-amino-acid chain; its full sequence is Acyl carrier protein phosphodiesterase (193 aa).

The protein belongs to the AcpH family.

It carries out the reaction holo-[ACP] + H2O = apo-[ACP] + (R)-4'-phosphopantetheine + H(+). In terms of biological role, converts holo-ACP to apo-ACP by hydrolytic cleavage of the phosphopantetheine prosthetic group from ACP. This chain is Acyl carrier protein phosphodiesterase, found in Salmonella agona (strain SL483).